The sequence spans 605 residues: Progranulin (605 aa).

A signal peptide spans methionine 1–glycine 17. 2 disulfides stabilise this stretch: cysteine 126–cysteine 139 and cysteine 133–cysteine 149. A glycan (N-linked (GlcNAc...) asparagine) is linked at asparagine 197. 6 disulfide bridges follow: cysteine 297-cysteine 309, cysteine 303-cysteine 319, cysteine 310-cysteine 327, cysteine 320-cysteine 334, cysteine 328-cysteine 341, and cysteine 335-cysteine 348. Residues glutamine 359–leucine 386 are disordered. The span at proline 368 to proline 385 shows a compositional bias: pro residues. Disulfide bonds link cysteine 392/cysteine 404 and cysteine 398/cysteine 414.

Belongs to the granulin family. As to quaternary structure, progranulin is secreted as a homodimer. Interacts with SLPI; interaction protects progranulin from proteolysis. Interacts (via region corresponding to granulin-7 peptide) with CTSD; stabilizes CTSD and increases its proteolytic activity. Interacts (via region corresponding to granulin-7 peptide) with SORT1; this interaction mediates endocytosis and lysosome delivery of progranulin; interaction occurs at the neuronal cell surface in a stressed nervous system. Interacts with PSAP; facilitates lysosomal delivery of progranulin from the extracellular space and the biosynthetic pathway. Forms a complex with PSAP and M6PR; PSAP bridges the binding between progranulin and M6PR. Forms a complex with PSAP and SORT1; progranulin bridges the interaction between PSAP and SORT1; facilitates lysosomal targeting of PSAP via SORT1; interaction enhances PSAP uptake in primary cortical neurons. Interacts (via regions corresponding to granulin-2 and granulin-7 peptides) with GBA1; this interaction prevents aggregation of GBA1-SCARB2 complex via interaction with HSPA1A upon stress. Interacts (via region corresponding to granulin-7 peptide) with HSPA1A; mediates recruitment of HSPA1A to GBA1 and prevents GBA1 aggregation in response to stress. Post-translationally, cleaved by ELANE; proteolysis is blocked by SLPI and is concentration- and time-dependent and induces CXCL8/IL-8 production; granulin-3 and granulin-4 are resistant to ELANE. Cleaved by CTSL in lysosome thus regulating the maturation and turnover of progranulin within the lysosome.

It localises to the secreted. The protein localises to the lysosome. Secreted protein that acts as a key regulator of lysosomal function and as a growth factor involved in inflammation, wound healing and cell proliferation. Regulates protein trafficking to lysosomes, and also the activity of lysosomal enzymes. Also facilitates the acidification of lysosomes, causing degradation of mature CTSD by CTSB. In addition, functions as a wound-related growth factor that acts directly on dermal fibroblasts and endothelial cells to promote division, migration and the formation of capillary-like tubule structures. Also promotes epithelial cell proliferation by blocking TNF-mediated neutrophil activation preventing release of oxidants and proteases. Moreover, modulates inflammation in neurons by preserving neurons survival, axonal outgrowth and neuronal integrity. Its function is as follows. Inhibits epithelial cell proliferation and induces epithelial cells to secrete IL-8. In terms of biological role, stabilizes CTSD through interaction with CTSD leading to maintain its aspartic-type peptidase activity. This chain is Progranulin (GRN), found in Cavia porcellus (Guinea pig).